A 1314-amino-acid chain; its full sequence is E3 ubiquitin-protein ligase RNF123 (1314 aa).

Alanine 2 carries the post-translational modification N-acetylalanine. Residues 74-254 (VDSEDNESQG…VAFNFGSRPL (181 aa)) form the B30.2/SPRY domain. The tract at residues 460–483 (HRSSRESRDGKEAREETTEERQRR) is disordered. Basic and acidic residues predominate over residues 462–483 (SSRESRDGKEAREETTEERQRR). Serine 675 bears the Phosphoserine mark. Arginine 683 is modified (asymmetric dimethylarginine). Positions 968–974 (WILVRLW) are interaction with NFKB1. Zn(2+) contacts are provided by cysteine 1254, cysteine 1257, cysteine 1269, histidine 1271, cysteine 1274, cysteine 1277, cysteine 1288, and cysteine 1291. An RING-type zinc finger spans residues 1254–1292 (CPICYAHPISAVFQPCGHKSCKACINQHLMNNKDCFFCK).

As to quaternary structure, component of the KPC complex composed of RNF123/KPC1 and UBAC1/KPC2. Interacts with UBAC1 and CDKN1B via its N-terminal domain. Interacts with RIGI (via N-terminus) and IFIH1 (via N-terminus). In terms of processing, ubiquitinated, leading to its degradation. Deubiquitinated by USP19, thereby stimulating CDKN1B ubiquitin-dependent degradation.

It is found in the cytoplasm. The enzyme catalyses S-ubiquitinyl-[E2 ubiquitin-conjugating enzyme]-L-cysteine + [acceptor protein]-L-lysine = [E2 ubiquitin-conjugating enzyme]-L-cysteine + N(6)-ubiquitinyl-[acceptor protein]-L-lysine.. The protein operates within protein modification; protein ubiquitination. Catalytic subunit of the KPC complex that acts as E3 ubiquitin-protein ligase. Promotes the ubiquitination and proteasome-mediated degradation of CDKN1B which is the cyclin-dependent kinase inhibitor at the G0-G1 transition of the cell cycle. Also acts as a key regulator of the NF-kappa-B signaling by promoting maturation of the NFKB1 component of NF-kappa-B: acts by catalyzing ubiquitination of the NFKB1 p105 precursor, leading to limited proteasomal degradation of NFKB1 p105 and generation of the active NFKB1 p50 subunit. Functions also as an inhibitor of innate antiviral signaling mediated by RIGI and IFIH1 independently of its E3 ligase activity. Interacts with the N-terminal CARD domains of RIGI and IFIH1 and competes with the downstream adapter MAVS. This Mus musculus (Mouse) protein is E3 ubiquitin-protein ligase RNF123 (Rnf123).